The following is a 335-amino-acid chain: Anthranilate phosphoribosyltransferase (335 aa).

Residues Gly82, 85–86 (GD), Thr90, 92–95 (NIST), 110–118 (KHGGRSVSS), and Ser122 each bind 5-phospho-alpha-D-ribose 1-diphosphate. Residue Gly82 participates in anthranilate binding. Residue Ser94 participates in Mg(2+) binding. Arg168 is a binding site for anthranilate. Residues Asp226 and Glu227 each coordinate Mg(2+).

The protein belongs to the anthranilate phosphoribosyltransferase family. As to quaternary structure, homodimer. The cofactor is Mg(2+).

The enzyme catalyses N-(5-phospho-beta-D-ribosyl)anthranilate + diphosphate = 5-phospho-alpha-D-ribose 1-diphosphate + anthranilate. It functions in the pathway amino-acid biosynthesis; L-tryptophan biosynthesis; L-tryptophan from chorismate: step 2/5. In terms of biological role, catalyzes the transfer of the phosphoribosyl group of 5-phosphorylribose-1-pyrophosphate (PRPP) to anthranilate to yield N-(5'-phosphoribosyl)-anthranilate (PRA). This chain is Anthranilate phosphoribosyltransferase, found in Francisella philomiragia subsp. philomiragia (strain ATCC 25017 / CCUG 19701 / FSC 153 / O#319-036).